Reading from the N-terminus, the 495-residue chain is ATP synthase subunit beta, chloroplastic (495 aa).

Position 172–179 (172–179) interacts with ATP; it reads GGAGVGKT.

The protein belongs to the ATPase alpha/beta chains family. As to quaternary structure, F-type ATPases have 2 components, CF(1) - the catalytic core - and CF(0) - the membrane proton channel. CF(1) has five subunits: alpha(3), beta(3), gamma(1), delta(1), epsilon(1). CF(0) has four main subunits: a(1), b(1), b'(1) and c(9-12).

The protein resides in the plastid. It localises to the chloroplast thylakoid membrane. The enzyme catalyses ATP + H2O + 4 H(+)(in) = ADP + phosphate + 5 H(+)(out). Functionally, produces ATP from ADP in the presence of a proton gradient across the membrane. The catalytic sites are hosted primarily by the beta subunits. In Barnardia japonica (Chinese squill), this protein is ATP synthase subunit beta, chloroplastic.